Here is a 181-residue protein sequence, read N- to C-terminus: 3-isopropylmalate dehydratase small subunit (181 aa).

It belongs to the LeuD family. LeuD type 2 subfamily. As to quaternary structure, heterodimer of LeuC and LeuD.

It catalyses the reaction (2R,3S)-3-isopropylmalate = (2S)-2-isopropylmalate. It functions in the pathway amino-acid biosynthesis; L-leucine biosynthesis; L-leucine from 3-methyl-2-oxobutanoate: step 2/4. Its function is as follows. Catalyzes the isomerization between 2-isopropylmalate and 3-isopropylmalate, via the formation of 2-isopropylmaleate. This chain is 3-isopropylmalate dehydratase small subunit, found in Deinococcus deserti (strain DSM 17065 / CIP 109153 / LMG 22923 / VCD115).